The primary structure comprises 348 residues: Cylicin-2 (348 aa).

The tract at residues 25 to 347 (KKSWNQQHFA…DEKKDAKKKG (323 aa)) is 31 X 3 AA repeats of K-K-X. Disordered stretches follow at residues 35-59 (LLFP…DNTV) and 101-348 (PTRT…KKGK). 4 stretches are compositionally biased toward basic and acidic residues: residues 103-159 (RTVE…DAKK), 166-217 (KDAE…EKDS), 238-267 (KADE…AKEI), and 276-342 (KPSS…EKKD). 3 tandem repeats follow at residues 157–184 (AKKD…EKGG), 185–212 (AKKD…EKGG), and 213–240 (TEKD…VKAD). The segment at 157–240 (AKKDSKKGKK…AIELQAVKAD (84 aa)) is 3 X approximate tandem repeats.

In terms of tissue distribution, testis.

It localises to the cytoplasm. The protein resides in the cytoskeleton. Its subcellular location is the perinuclear theca. The protein localises to the calyx. In terms of biological role, plays a role in the establishment of normal sperm morphology during spermatogenesis. It is required for acrosome attachment to the nuclear envelope, and proper manchette elongation and disassembly. This chain is Cylicin-2 (CYLC2), found in Homo sapiens (Human).